Reading from the N-terminus, the 804-residue chain is MKISVNWLKDFLPSFSPDITSLVEKLTFLGLEVEDVESTPLPDLRVVVGRVQSVALHPDADRLRICMVDTGLEEPLQIVCGAPNVAEGMLVPVATEGSRLTMQDGTSFVIKPSKIRGQRSFGMICAADELGLSADHSGVMELDSSYAVGEPFARYLDSDTVLDIAVTPNRPDVLSHLGIARELGSAPDAILFPEEAPLEFSADSPLVQVMDSGACPLYVGVIIRGVTVGPSPRWLSARLESIGLRPKNNIVDITNFILHALGQPLHAFDLQKLKGGRVIVRSDFSGSFTTLGAEQCTVEPGMPVICDTQMPVALAGVMGGLDSAVGEGTVDILLEAACFAPSAVRRSARKAGISSDSSYRFERGIDIRNVLPAARAAVALILETAGGTVGEATLQGDPSPALLVLPFRPRRANELLGTAIETDAMQAMLARIGFRTLALDEGVMQVEVPSCRIDVLQEIDLIEEVARLHGYDNIEASGRLAATYPASRTRPGYFPDFLRGVAVGLDFREVLTNPLIRREEAAPFGDGLVSVLNPISEGLEVLRPGLVPGMLKVIAHNIRHGNRDMRLFEVAHGFSVADPSGAAEQGPLGAYCEKEWLVLALTGNRYPRSWNQPPDRVDFYDAVGAAEMLLGKLNLLDKSAVNIYNENTVSIDLELTEGKKKRSQRAGRAMRLDSALLSQFGIEQDVFTVELDVSVLEMLYSPDVVYDPPSKFPAVQRDLSFILPGTVPVQSLVGLVRSSDPLIRDVSVFDVFERGSGGGGERSVGLSISIADHSGTLQEGRISEILRTVGVNAESKLGAVIRQV.

Residues Pro-40 to Ala-153 enclose the tRNA-binding domain. The B5 domain maps to Pro-400–Ala-476. Mg(2+)-binding residues include Asp-454, Asp-460, Glu-463, and Glu-464. The region spanning Ser-710–Arg-802 is the FDX-ACB domain.

Belongs to the phenylalanyl-tRNA synthetase beta subunit family. Type 1 subfamily. In terms of assembly, tetramer of two alpha and two beta subunits. Requires Mg(2+) as cofactor.

The protein resides in the cytoplasm. The catalysed reaction is tRNA(Phe) + L-phenylalanine + ATP = L-phenylalanyl-tRNA(Phe) + AMP + diphosphate + H(+). The protein is Phenylalanine--tRNA ligase beta subunit of Chlorobium luteolum (strain DSM 273 / BCRC 81028 / 2530) (Pelodictyon luteolum).